A 549-amino-acid polypeptide reads, in one-letter code: MTLASIRRGYHVIKTLLQYGLDDVLPPKMTPWYFKLARNSLFWIRNKHKGKSGGERLKLAMQELGPVYIKLGQMLSTRRDLLSDEWANELAMLQDKVPPFDGALARQAIETELKAPIESFFDDFNETPLASASISQVHTATLKSNGKAVVLKVLRPNVEAKIQADLLLMSQTAKIIDYLLGEGNRLRPSEVIEDYRVTILGELNLKLEALNAIKLRNNFLDSDALYIPYVYEEFCYPRLMVMERIYGIPVSDIAALKAQGTNFKLLAERGVELFFTQVFRDNFFHADMHPGNIFISRDHPENPYYIGLDCGIMGTLSEVDKRYLAENFLAFFNRDYHRIAQLYIESGWVSEKTDLQAFEQAIKVVCEPMFNKPLDEISFGHVLLELFRTARHFDIVVQPQLVLLEKTLLYIEGLGRQLYPQLDLWQTAKPFLEQWMAEQVGPKAMFKKVSTKLPYWSDKLPEFPELIYDNLKLGRKLLSSQQQMLDKYLKYQQQAHKSNYLLITSAILLICGTLLFNQDATLWSPYVCLISGAALWIIGWRSRPKNRKF.

In terms of domain architecture, Protein kinase spans 123–501 (DFNETPLASA…QQQAHKSNYL (379 aa)). ATP is bound by residues 129-137 (LASASISQV) and Lys152. Asp287 (proton acceptor) is an active-site residue. 2 consecutive transmembrane segments (helical) span residues 498–518 (SNYL…LFNQ) and 520–540 (ATLW…IIGW).

Belongs to the ABC1 family. UbiB subfamily.

Its subcellular location is the cell inner membrane. The protein operates within cofactor biosynthesis; ubiquinone biosynthesis [regulation]. Its function is as follows. Is probably a protein kinase regulator of UbiI activity which is involved in aerobic coenzyme Q (ubiquinone) biosynthesis. The sequence is that of Probable protein kinase UbiB from Shewanella sp. (strain MR-4).